A 96-amino-acid polypeptide reads, in one-letter code: Citrate lyase acyl carrier protein (96 aa).

Serine 14 is modified (O-(phosphoribosyl dephospho-coenzyme A)serine).

The protein belongs to the CitD family. As to quaternary structure, oligomer with a subunit composition of (alpha,beta,gamma)6.

It localises to the cytoplasm. Covalent carrier of the coenzyme of citrate lyase. The protein is Citrate lyase acyl carrier protein of Pectobacterium atrosepticum (strain SCRI 1043 / ATCC BAA-672) (Erwinia carotovora subsp. atroseptica).